The primary structure comprises 356 residues: S-adenosylmethionine:tRNA ribosyltransferase-isomerase (356 aa).

It belongs to the QueA family. As to quaternary structure, monomer.

It localises to the cytoplasm. The enzyme catalyses 7-aminomethyl-7-carbaguanosine(34) in tRNA + S-adenosyl-L-methionine = epoxyqueuosine(34) in tRNA + adenine + L-methionine + 2 H(+). It functions in the pathway tRNA modification; tRNA-queuosine biosynthesis. Transfers and isomerizes the ribose moiety from AdoMet to the 7-aminomethyl group of 7-deazaguanine (preQ1-tRNA) to give epoxyqueuosine (oQ-tRNA). The chain is S-adenosylmethionine:tRNA ribosyltransferase-isomerase from Yersinia pseudotuberculosis serotype O:3 (strain YPIII).